We begin with the raw amino-acid sequence, 114 residues long: Phycoerythrin alpha-1 subunit (114 aa).

Residues aspartate 52, serine 53, glutamate 63, arginine 64, cysteine 67, threonine 72, lysine 74, alanine 75, and lysine 84 each coordinate (2R,3E)-phycoerythrobilin.

It belongs to the phycoerythrin family. Heterotetramer of 2 different alpha chains and 2 identical beta chains which form 2 alpha-beta heterodimers within the heterotetramer. The two alpha-beta heterodimers are rotated to an open configuration in contrast to the closed configuration found in other cryptophyte species due to the insertion of a single amino acid, Asp-65, in a conserved region of the alpha chain. In the open form, the central chromophores are not in physical contact but are separated by a water-filled channel. In terms of processing, contains three phycoerythrobilin chromophores with binding mediated by both the alpha and beta subunits.

It localises to the plastid. Its subcellular location is the chloroplast thylakoid membrane. Its function is as follows. Light-harvesting photosynthetic tetrapyrrole chromophore-protein from the phycobiliprotein complex. This is Phycoerythrin alpha-1 subunit from Hemiselmis andersenii (Cryptophyte alga).